A 201-amino-acid polypeptide reads, in one-letter code: 3-isopropylmalate dehydratase small subunit (201 aa).

Belongs to the LeuD family. LeuD type 1 subfamily. As to quaternary structure, heterodimer of LeuC and LeuD.

It carries out the reaction (2R,3S)-3-isopropylmalate = (2S)-2-isopropylmalate. Its pathway is amino-acid biosynthesis; L-leucine biosynthesis; L-leucine from 3-methyl-2-oxobutanoate: step 2/4. Catalyzes the isomerization between 2-isopropylmalate and 3-isopropylmalate, via the formation of 2-isopropylmaleate. The protein is 3-isopropylmalate dehydratase small subunit of Afipia carboxidovorans (strain ATCC 49405 / DSM 1227 / KCTC 32145 / OM5) (Oligotropha carboxidovorans).